The following is a 336-amino-acid chain: Atypical chemokine receptor 1 (336 aa).

The tract at residues 1–30 is mediates Plasmodium vivax Duffy receptor (PVDR) binding; it reads MGNCLHRAELSPSTENSSQLDFEDVWNSSY. Over 1–63 the chain is Extracellular; that stretch reads MGNCLHRAEL…CNLLDDSALP (63 aa). Asparagine 16 is a glycosylation site (N-linked (GlcNAc...) asparagine). Tyrosine 30 carries the post-translational modification Sulfotyrosine. Asparagine 33 carries an N-linked (GlcNAc...) asparagine glycan. A Sulfotyrosine modification is found at tyrosine 41. 2 disulfides stabilise this stretch: cysteine 51–cysteine 276 and cysteine 129–cysteine 195. The chain crosses the membrane as a helical span at residues 64–84; the sequence is FFILTSVLGILASSTVLFMLF. The Cytoplasmic segment spans residues 85–95; it reads RPLFRWQLCPG. A helical membrane pass occupies residues 96–116; sequence WPVLAQLAVGSALFSIVVPVL. Over 117–129 the chain is Extracellular; sequence APGLGSTRSSALC. The chain crosses the membrane as a helical span at residues 130–153; that stretch reads SLGYCVWYGSAFAQALLLGCHASL. At 154–166 the chain is on the cytoplasmic side; sequence GHRLGAGQVPGLT. A helical membrane pass occupies residues 167–187; sequence LGLTVGIWGVAALLTLPVTLA. Residues 188-207 are Extracellular-facing; it reads SGASGGLCTLIYSTELKALQ. The chain crosses the membrane as a helical span at residues 208 to 228; the sequence is ATHTVACLAIFVLLPLGLFGA. Residues 229-244 are Cytoplasmic-facing; that stretch reads KGLKKALGMGPGPWMN. The chain crosses the membrane as a helical span at residues 245–265; the sequence is ILWAWFIFWWPHGVVLGLDFL. Residues 266 to 287 are Extracellular-facing; the sequence is VRSKLLLLSTCLAQQALDLLLN. Residues 288-308 form a helical membrane-spanning segment; sequence LAEALAILHCVATPLLLALFC. At 309 to 336 the chain is on the cytoplasmic side; that stretch reads HQATRTLLPSLPLPEGWSSHLDTLGSKS.

This sequence belongs to the G-protein coupled receptor 1 family. Atypical chemokine receptor subfamily. (Microbial infection) Interacts (via N-terminal extracellular domain) with Plasmodium vivax Duffy receptor (PVDR) (via PvRII region). In terms of assembly, (Microbial infection) Interacts (via N-terminal extracellular domain) with Plasmodium knowlesi Duffy receptor alpha form (DBPalpha) (via region II). Sulfation at Tyr-41 facilitates interaction with MGSA/CXCL1, RANTES/CCL5 and MCP-1/CCL2 but not IL8/CXCL8. Sulfation at Tyr-30 facilitates interaction with IL8/CXCL8. In terms of processing, (Microbial infection) Sulfation at Tyr-41 facilitates interaction with Plasmodium vivax Duffy receptor (PVDR). Sulfation at Tyr-30/Tyr-41 and Tyr-41 alone increases binding affinity of Plasmodium vivax parasites and likely promotes invasion of red blood cells. Post-translationally, (Microbial infection) Sulfation at Tyr-41 facilitates interaction with Plasmodium knowlesi Duffy receptor alpha form (DBPalpha). Sulfation at Tyr-30/Tyr-41 and Tyr-41 alone increases binding affinity of Plasmodium knowlesi parasites and likely promotes invasion of red blood cells. In terms of tissue distribution, found in adult kidney, adult spleen, bone marrow and fetal liver. In particular, it is expressed along postcapillary venules throughout the body, except in the adult liver. Erythroid cells and postcapillary venule endothelium are the principle tissues expressing duffy. Fy(-A-B) individuals do not express duffy in the bone marrow, however they do, in postcapillary venule endothelium.

The protein localises to the early endosome. The protein resides in the recycling endosome. It is found in the membrane. Atypical chemokine receptor that controls chemokine levels and localization via high-affinity chemokine binding that is uncoupled from classic ligand-driven signal transduction cascades, resulting instead in chemokine sequestration, degradation, or transcytosis. Also known as interceptor (internalizing receptor) or chemokine-scavenging receptor or chemokine decoy receptor. Has a promiscuous chemokine-binding profile, interacting with inflammatory chemokines of both the CXC and the CC subfamilies but not with homeostatic chemokines. Acts as a receptor for chemokines including CCL2, CCL5, CCL7, CCL11, CCL13, CCL14, CCL17, CXCL5, CXCL6, IL8/CXCL8, CXCL11, GRO, RANTES, MCP-1 and TARC. May regulate chemokine bioavailability and, consequently, leukocyte recruitment through two distinct mechanisms: when expressed in endothelial cells, it sustains the abluminal to luminal transcytosis of tissue-derived chemokines and their subsequent presentation to circulating leukocytes; when expressed in erythrocytes, serves as blood reservoir of cognate chemokines but also as a chemokine sink, buffering potential surges in plasma chemokine levels. In terms of biological role, (Microbial infection) Acts as a receptor for the malaria parasite Plasmodium vivax. Its function is as follows. (Microbial infection) Acts as a receptor for the malaria parasite Plasmodium knowlesi. The chain is Atypical chemokine receptor 1 (ACKR1) from Homo sapiens (Human).